Consider the following 490-residue polypeptide: Probable cytosol aminopeptidase (490 aa).

Mn(2+) contacts are provided by Lys-257 and Asp-262. Residue Lys-269 is part of the active site. Mn(2+) contacts are provided by Asp-281, Asp-341, and Glu-343. Residue Arg-345 is part of the active site.

Belongs to the peptidase M17 family. Mn(2+) is required as a cofactor.

The protein resides in the cytoplasm. It carries out the reaction Release of an N-terminal amino acid, Xaa-|-Yaa-, in which Xaa is preferably Leu, but may be other amino acids including Pro although not Arg or Lys, and Yaa may be Pro. Amino acid amides and methyl esters are also readily hydrolyzed, but rates on arylamides are exceedingly low.. The enzyme catalyses Release of an N-terminal amino acid, preferentially leucine, but not glutamic or aspartic acids.. Its function is as follows. Presumably involved in the processing and regular turnover of intracellular proteins. Catalyzes the removal of unsubstituted N-terminal amino acids from various peptides. The chain is Probable cytosol aminopeptidase from Prochlorococcus marinus (strain AS9601).